Here is a 404-residue protein sequence, read N- to C-terminus: Argininosuccinate synthase (404 aa).

9–17 (AYSGGLDTS) is a binding site for ATP. Y86 serves as a coordination point for L-citrulline. Position 116 (G116) interacts with ATP. Residues T118, N122, and D123 each contribute to the L-aspartate site. N122 is a binding site for L-citrulline. Residues R126, S174, S183, E259, and Y271 each contribute to the L-citrulline site.

Belongs to the argininosuccinate synthase family. Type 1 subfamily. Homotetramer.

It localises to the cytoplasm. It catalyses the reaction L-citrulline + L-aspartate + ATP = 2-(N(omega)-L-arginino)succinate + AMP + diphosphate + H(+). The protein operates within amino-acid biosynthesis; L-arginine biosynthesis; L-arginine from L-ornithine and carbamoyl phosphate: step 2/3. This Listeria innocua serovar 6a (strain ATCC BAA-680 / CLIP 11262) protein is Argininosuccinate synthase.